A 789-amino-acid polypeptide reads, in one-letter code: Bifunctional purine biosynthetic protein PUR2,5 (789 aa).

Residues 1–428 form a GARS region; it reads MEKINVLVVG…NRTDIAHRAF (428 aa). The 208-residue stretch at 114-321 folds into the ATP-grasp domain; the sequence is KDFMKKHNIP…LLELMLATVE (208 aa). 140-201 lines the ATP pocket; sequence IANSSHNLVI…EEFLEGDELS (62 aa). 2 residues coordinate Mg(2+): Glu291 and Asn293. Residues 438–773 are AIRS; that stretch reads LTYEDAGVSV…TVYTIGKLVE (336 aa).

In the N-terminal section; belongs to the GARS family. It in the C-terminal section; belongs to the AIR synthase family. The cofactor is Mg(2+). Mn(2+) serves as cofactor.

Its subcellular location is the cytoplasm. The protein resides in the cytosol. The catalysed reaction is 2-formamido-N(1)-(5-O-phospho-beta-D-ribosyl)acetamidine + ATP = 5-amino-1-(5-phospho-beta-D-ribosyl)imidazole + ADP + phosphate + H(+). The enzyme catalyses 5-phospho-beta-D-ribosylamine + glycine + ATP = N(1)-(5-phospho-beta-D-ribosyl)glycinamide + ADP + phosphate + H(+). The protein operates within purine metabolism; IMP biosynthesis via de novo pathway; 5-amino-1-(5-phospho-D-ribosyl)imidazole from N(2)-formyl-N(1)-(5-phospho-D-ribosyl)glycinamide: step 2/2. It functions in the pathway purine metabolism; IMP biosynthesis via de novo pathway; N(1)-(5-phospho-D-ribosyl)glycinamide from 5-phospho-alpha-D-ribose 1-diphosphate: step 2/2. In terms of biological role, catalyzes the second and fifth step in the 'de novo' purine biosynthesis pathway; contains phosphoribosylamine--glycine ligase (GARS) and phosphoribosylformylglycinamidine cyclo-ligase (AIRS) activities. The protein is Bifunctional purine biosynthetic protein PUR2,5 of Pichia angusta (Yeast).